Consider the following 263-residue polypeptide: GTP cyclohydrolase FolE2 (263 aa).

The protein belongs to the GTP cyclohydrolase IV family.

It carries out the reaction GTP + H2O = 7,8-dihydroneopterin 3'-triphosphate + formate + H(+). It functions in the pathway cofactor biosynthesis; 7,8-dihydroneopterin triphosphate biosynthesis; 7,8-dihydroneopterin triphosphate from GTP: step 1/1. Functionally, converts GTP to 7,8-dihydroneopterin triphosphate. This Nitrosospira multiformis (strain ATCC 25196 / NCIMB 11849 / C 71) protein is GTP cyclohydrolase FolE2.